Here is a 444-residue protein sequence, read N- to C-terminus: Cell wall mannoprotein PST1 (444 aa).

A signal peptide spans 1-19; the sequence is MQLHSLIASTALLITSALA. N-linked (GlcNAc...) asparagine glycans are attached at residues asparagine 57, asparagine 76, asparagine 83, asparagine 86, asparagine 196, asparagine 210, asparagine 228, asparagine 235, asparagine 242, asparagine 263, asparagine 268, asparagine 280, asparagine 292, asparagine 305, and asparagine 329. Composition is skewed to low complexity over residues 359–381 and 395–418; these read SVKL…SKSS and KAAA…SSKG. The tract at residues 359–418 is disordered; the sequence is SVKLSSTSKSQSSQTTAKVSKSSSKAEEKKFTSGDIKAAASASSVSSSGASSSSSKSSKG. Asparagine 419 carries the GPI-anchor amidated asparagine lipid modification. The propeptide at 420–444 is removed in mature form; sequence AAIMAPIGQTTPLVGLLTAIIMSIM.

It belongs to the SPS2 family. Post-translationally, extensively N- and O-mannosylated.

It is found in the cell membrane. The protein resides in the secreted. The protein localises to the cell wall. Its function is as follows. Has a partially redundant function to ECM33 in cell wall integrity. May be involved in a repair mechanism activated in response to cell wall damage. This Saccharomyces cerevisiae (strain ATCC 204508 / S288c) (Baker's yeast) protein is Cell wall mannoprotein PST1 (PST1).